Here is a 769-residue protein sequence, read N- to C-terminus: Integrin beta-2 (769 aa).

The N-terminal stretch at 1-22 (MLCRCSPLLLLVGLLTLRSALS) is a signal peptide. Q23 bears the Pyrrolidone carboxylic acid mark. Topologically, residues 23–700 (QECAKYKVST…ETRECVKGPN (678 aa)) are extracellular. In terms of domain architecture, PSI spans 24–74 (ECAKYKVSTCRDCIESGPGCAWCQKLNFSGQGEPDSVRCDTREQLLAKGCV). Disulfide bonds link C25/C43, C33/C447, C36/C62, C46/C73, C191/C198, C246/C286, C386/C400, C420/C445, C449/C467, C459/C470, C472/C481, C483/C514, C497/C512, C506/C517, C519/C534, C536/C559, C541/C557, C549/C562, C564/C573, C575/C598, C582/C596, C590/C601, C603/C612, C615/C618, C622/C662, C628/C647, C631/C643, and C670/C695. N-linked (GlcNAc...) asparagine glycans are attached at residues N50 and N116. One can recognise a VWFA domain in the interval 124 to 363 (GYPIDLYYLM…ELIKNAYNKL (240 aa)). Mg(2+)-binding residues include S136 and S138. Ca(2+) is bound by residues S138, D141, D142, and D173. N229, D231, P233, and E234 together coordinate Ca(2+). E234 lines the Mg(2+) pocket. Residue N254 is glycosylated (N-linked (GlcNAc...) asparagine). Positions 264 and 347 each coordinate Ca(2+). A Cell attachment site motif is present at residues 397–399 (RGD). 4 consecutive I-EGF domains span residues 449–482 (CGDS…KHCE), 483–535 (CQTQ…QFCE), 536–574 (CDNM…SACQ), and 575–613 (CLKS…PLCT). Residue N501 is glycosylated (N-linked (GlcNAc...) asparagine). The N-linked (GlcNAc...) asparagine glycan is linked to N642. The helical transmembrane segment at 701 to 723 (IAAIVGGTVGGVVLVGIFLLVIW) threads the bilayer. Residues 724–769 (KVLTHLSDLREYKRFEKEKLKSQWNNDNPLFKSATTTVMNPKFAER) are Cytoplasmic-facing. A phosphoserine mark is found at S745 and S756. Residues T758 and T760 each carry the phosphothreonine modification.

Belongs to the integrin beta chain family. In terms of assembly, heterodimer of an alpha and a beta subunit. The ITGB2 beta subunit associates with the ITGAL, ITGAM, ITGAX or ITGAD alpha subunits. Found in a complex with CD177 and ITGAM/CD11b. Interacts with FGR. Interacts with COPS5 and RANBP9. Interacts with FLNA (via filamin repeats 4, 9, 12, 17, 19, 21, and 23). Interacts with THBD. In terms of processing, both Ser-745 and Ser-756 become phosphorylated when T-cells are exposed to phorbol esters. Phosphorylation on Thr-758 (but not on Ser-756) allows interaction with 14-3-3 proteins.

Its subcellular location is the cell membrane. The protein localises to the membrane raft. Integrin ITGAL/ITGB2 is a receptor for ICAM1, ICAM2, ICAM3 and ICAM4. Integrin ITGAL/ITGB2 is also a receptor for the secreted form of ubiquitin-like protein ISG15; the interaction is mediated by ITGAL. Integrins ITGAM/ITGB2 and ITGAX/ITGB2 are receptors for the iC3b fragment of the third complement component and for fibrinogen. Integrin ITGAX/ITGB2 recognizes the sequence G-P-R in fibrinogen alpha-chain. Integrin ITGAM/ITGB2 recognizes P1 and P2 peptides of fibrinogen gamma chain. Integrin ITGAM/ITGB2 is also a receptor for factor X. Integrin ITGAD/ITGB2 is a receptor for ICAM3 and VCAM1. Contributes to natural killer cell cytotoxicity. Involved in leukocyte adhesion and transmigration of leukocytes including T-cells and neutrophils. Triggers neutrophil transmigration during lung injury through PTK2B/PYK2-mediated activation. Integrin alpha-L/beta-2 in association with ICAM3, contributes to apoptotic neutrophil phagocytosis by macrophages. This chain is Integrin beta-2 (ITGB2), found in Sus scrofa (Pig).